The following is an 83-amino-acid chain: NAD(P)H-quinone oxidoreductase subunit L (83 aa).

The next 2 helical transmembrane spans lie at 17-37 (VLLA…LALL) and 53-73 (TAIY…APFI).

Belongs to the complex I NdhL subunit family. In terms of assembly, NDH-1 can be composed of about 15 different subunits; different subcomplexes with different compositions have been identified which probably have different functions.

It localises to the cellular thylakoid membrane. It catalyses the reaction a plastoquinone + NADH + (n+1) H(+)(in) = a plastoquinol + NAD(+) + n H(+)(out). The enzyme catalyses a plastoquinone + NADPH + (n+1) H(+)(in) = a plastoquinol + NADP(+) + n H(+)(out). Functionally, NDH-1 shuttles electrons from an unknown electron donor, via FMN and iron-sulfur (Fe-S) centers, to quinones in the respiratory and/or the photosynthetic chain. The immediate electron acceptor for the enzyme in this species is believed to be plastoquinone. Couples the redox reaction to proton translocation, and thus conserves the redox energy in a proton gradient. Cyanobacterial NDH-1 also plays a role in inorganic carbon-concentration. The polypeptide is NAD(P)H-quinone oxidoreductase subunit L (Synechococcus sp. (strain RCC307)).